The sequence spans 476 residues: Protein EARLY HEADING DATE 2 (476 aa).

The span at 1–13 (MLLSDLSSDQEAT) shows a compositional bias: polar residues. The disordered stretch occupies residues 1–27 (MLLSDLSSDQEATGSNSHGGGGGGDRM). C2H2-type zinc fingers lie at residues 106–128 (FVCE…RRGH) and 156–186 (YVCP…SRKH). 2 short sequence motifs (nuclear localization signal) span residues 124–131 (HRRGHNLP) and 178–185 (IKKHFSRK). The segment at 191–214 (WRCERCGKRYAVHSDWKAHVKNCG) adopts a C2H2-type 2; degenerate zinc-finger fold. Residues C193, C196, H209, C213, C220, C222, H235, and C239 each contribute to the Zn(2+) site. The segment at 218–241 (YRCDCGILFSRKDSLLTHRAFCDA) adopts a CCHC-type 2; atypical zinc-finger fold. Residues 228–240 (RKDSLLTHRAFCD) form an SHR-binding region.

It localises to the nucleus. Functionally, transcription activator that acts as a flowering master switch in both long and short days, independently of the circadian clock. Promotes flowering upstream of HD1 by up-regulating FTL1, FTL4, FTL5, FTL6, EHD1, HD3A and RFT1. Seems to repress FTL11 expression. May recognize the consensus motif 5'-TTTGTCGTAAT-3' in target gene promoters. This chain is Protein EARLY HEADING DATE 2, found in Oryza sativa subsp. indica (Rice).